The sequence spans 274 residues: Glycerol uptake facilitator protein (274 aa).

Transmembrane regions (helical) follow at residues 3 to 23 and 38 to 58; these read AFWG…GVCA and IVVV…VGGI. The short motif at 64-66 is the NPA 1 element; it reads NPA. 3 helical membrane-spanning segments follow: residues 82–102, 131–151, and 164–184; these read VPVY…IIYL, FANV…ILAI, and IVGF…GYAI. The NPA 2 motif lies at 185 to 187; that stretch reads NPA. Residues 238–258 form a helical membrane-spanning segment; that stretch reads ITSSFWIVSVILVVVLLGLYV.

This sequence belongs to the MIP/aquaporin (TC 1.A.8) family.

The protein localises to the cell membrane. It carries out the reaction glycerol(in) = glycerol(out). Its function is as follows. Mediates glycerol diffusion across the cytoplasmic membrane via a pore-type mechanism. The polypeptide is Glycerol uptake facilitator protein (glpF) (Bacillus subtilis (strain 168)).